The sequence spans 185 residues: Ribosome-recycling factor (185 aa).

The protein belongs to the RRF family.

It is found in the cytoplasm. Its function is as follows. Responsible for the release of ribosomes from messenger RNA at the termination of protein biosynthesis. May increase the efficiency of translation by recycling ribosomes from one round of translation to another. This chain is Ribosome-recycling factor, found in Shewanella sp. (strain ANA-3).